A 339-amino-acid chain; its full sequence is Glycerol-3-phosphate dehydrogenase [NAD(P)+] (339 aa).

Residues Ser15, Tyr16, His36, and Lys110 each coordinate NADPH. Residues Lys110, Gly139, and Thr141 each coordinate sn-glycerol 3-phosphate. Ala143 lines the NADPH pocket. Residues Lys195, Asp248, Ser258, Arg259, and Asn260 each coordinate sn-glycerol 3-phosphate. The active-site Proton acceptor is Lys195. Position 259 (Arg259) interacts with NADPH. The NADPH site is built by Val283 and Glu285.

The protein belongs to the NAD-dependent glycerol-3-phosphate dehydrogenase family.

The protein localises to the cytoplasm. It carries out the reaction sn-glycerol 3-phosphate + NAD(+) = dihydroxyacetone phosphate + NADH + H(+). It catalyses the reaction sn-glycerol 3-phosphate + NADP(+) = dihydroxyacetone phosphate + NADPH + H(+). It participates in membrane lipid metabolism; glycerophospholipid metabolism. Its function is as follows. Catalyzes the reduction of the glycolytic intermediate dihydroxyacetone phosphate (DHAP) to sn-glycerol 3-phosphate (G3P), the key precursor for phospholipid synthesis. In Shigella dysenteriae serotype 1 (strain Sd197), this protein is Glycerol-3-phosphate dehydrogenase [NAD(P)+].